Here is a 114-residue protein sequence, read N- to C-terminus: Fumarate reductase subunit D (114 aa).

The next 3 helical transmembrane spans lie at 25 to 45 (SGLA…FGII), 50 to 70 (IIAF…TIFP), and 94 to 114 (LIFY…VIAI).

This sequence belongs to the FrdD family. In terms of assembly, part of an enzyme complex containing four subunits: a flavoprotein (FrdA), an iron-sulfur protein (FrdB), and two hydrophobic anchor proteins (FrdC and FrdD).

It localises to the cell inner membrane. Functionally, anchors the catalytic components of the fumarate reductase complex to the cell membrane, binds quinones. The chain is Fumarate reductase subunit D from Mannheimia succiniciproducens (strain KCTC 0769BP / MBEL55E).